Reading from the N-terminus, the 409-residue chain is uncharacterized protein (409 aa).

The next 10 helical transmembrane spans lie at 53 to 73 (IITL…YVHC), 83 to 103 (WCYF…NVDG), 115 to 135 (LGEL…AIVM), 141 to 161 (IGPY…YLAH), 183 to 203 (VLFM…WTYG), 205 to 225 (STTV…VTCL), 243 to 263 (CLLQ…WASV), 265 to 285 (NLIT…FGYI), 299 to 319 (CSLF…SILA), and 329 to 349 (TVAL…FSYF). Positions 388–401 (EEGSSSIGNSTDDI) are enriched in polar residues. The segment at 388–409 (EEGSSSIGNSTDDINPSEIEEI) is disordered.

The protein belongs to the CDP-alcohol phosphatidyltransferase class-I family.

The protein localises to the membrane. This is an uncharacterized protein from Dictyostelium discoideum (Social amoeba).